An 86-amino-acid chain; its full sequence is Conotoxin Lt15a (86 aa).

The N-terminal stretch at 1-23 (MEKLTILILVATVLLAIQVLVQS) is a signal peptide. A propeptide spanning residues 24-49 (DGENPVKGRVKHYAAKRFSALFRGPR) is cleaved from the precursor.

This sequence belongs to the conotoxin O2 superfamily. In terms of processing, contains 4 disulfide bonds. Expressed by the venom duct.

It localises to the secreted. This Conus litteratus (Lettered cone) protein is Conotoxin Lt15a.